A 595-amino-acid chain; its full sequence is DNA damage-binding protein CMR1 (595 aa).

A disordered region spans residues 20 to 79 (ALLDSLGLDPAGASSPFGSSPAPTSNKTKPKPKPAPKKRKAAAVIAVDEGPRRRSGRIAG). A compositionally biased stretch (low complexity) spans 29-46 (PAGASSPFGSSPAPTSNK). Residues 47–60 (TKPKPKPAPKKRKA) are compositionally biased toward basic residues. 4 WD repeats span residues 185-226 (VTNE…MEKP), 255-297 (HAKN…ELFS), 300-339 (DEDL…RESG), and 349-389 (GRGA…SISS). A disordered region spans residues 397-429 (AIEEEEEGTSTLSGQSSSLPHDTHPTRESDYST). The segment covering 405–415 (TSTLSGQSSSL) has biased composition (low complexity). Over residues 417-426 (HDTHPTRESD) the composition is skewed to basic and acidic residues. 3 WD repeats span residues 448–487 (QHGK…SLVD), 519–556 (LRAQ…VGLW), and 558–595 (DDVT…GDHI).

Belongs to the WD repeat DDB2/WDR76 family.

DNA-binding protein that binds to both single- and double-stranded DNA. Binds preferentially to UV-damaged DNA. May be involved in DNA-metabolic processes. This is DNA damage-binding protein CMR1 from Cryptococcus neoformans var. neoformans serotype D (strain B-3501A) (Filobasidiella neoformans).